Consider the following 431-residue polypeptide: 5-methylthioadenosine/S-adenosylhomocysteine deaminase (431 aa).

His64 and His66 together coordinate Zn(2+). Residues Glu93, Arg145, and His183 each contribute to the substrate site. His210 lines the Zn(2+) pocket. Positions 213 and 299 each coordinate substrate. Zn(2+) is bound at residue Asp299.

Belongs to the metallo-dependent hydrolases superfamily. MTA/SAH deaminase family. It depends on Zn(2+) as a cofactor.

It catalyses the reaction S-adenosyl-L-homocysteine + H2O + H(+) = S-inosyl-L-homocysteine + NH4(+). The catalysed reaction is S-methyl-5'-thioadenosine + H2O + H(+) = S-methyl-5'-thioinosine + NH4(+). Catalyzes the deamination of 5-methylthioadenosine and S-adenosyl-L-homocysteine into 5-methylthioinosine and S-inosyl-L-homocysteine, respectively. Is also able to deaminate adenosine. This chain is 5-methylthioadenosine/S-adenosylhomocysteine deaminase, found in Syntrophomonas wolfei subsp. wolfei (strain DSM 2245B / Goettingen).